A 31-amino-acid chain; its full sequence is Cytochrome b6-f complex subunit 6 (31 aa).

The helical transmembrane segment at Ile4–Gly24 threads the bilayer.

This sequence belongs to the PetL family. As to quaternary structure, the 4 large subunits of the cytochrome b6-f complex are cytochrome b6, subunit IV (17 kDa polypeptide, PetD), cytochrome f and the Rieske protein, while the 4 small subunits are PetG, PetL, PetM and PetN. The complex functions as a dimer.

The protein resides in the plastid. The protein localises to the chloroplast thylakoid membrane. Functionally, component of the cytochrome b6-f complex, which mediates electron transfer between photosystem II (PSII) and photosystem I (PSI), cyclic electron flow around PSI, and state transitions. PetL is important for photoautotrophic growth as well as for electron transfer efficiency and stability of the cytochrome b6-f complex. The chain is Cytochrome b6-f complex subunit 6 from Coffea arabica (Arabian coffee).